Consider the following 156-residue polypeptide: Male-specific protein scotti (156 aa).

Residues 26 to 48 (TADAGDDADTLEDGQQQQQQQHQ) are disordered. N-linked (GlcNAc...) asparagine glycosylation is present at Asn137.

It belongs to the male-specific scotti family.

Its function is as follows. Post-meiotically transcribed gene that has a role in late spermiogenesis; required for actin cone progression during spermatid individualization. The sequence is that of Male-specific protein scotti from Drosophila erecta (Fruit fly).